The chain runs to 103 residues: MAIQGIESVMQAMQTAALQASGSKTDDASSADFGAEMKAALNKISETQTAARSQAQAFEMGKEGVSLNDVMVDLQKSSVSMQMGIQVRNKLVSAYSDIMNMQV.

This sequence belongs to the FliE family.

It localises to the bacterial flagellum basal body. This chain is Flagellar hook-basal body complex protein FliE, found in Erwinia tasmaniensis (strain DSM 17950 / CFBP 7177 / CIP 109463 / NCPPB 4357 / Et1/99).